Here is a 701-residue protein sequence, read N- to C-terminus: Polyribonucleotide nucleotidyltransferase (701 aa).

Residues aspartate 485 and aspartate 491 each coordinate Mg(2+). The 60-residue stretch at 552 to 611 (PKIFKTTVDPEKIRDIIGPGGKMINKIIAKTNVKIDIEPDGRIFVAAPDDISGNRAISMI) folds into the KH domain. In terms of domain architecture, S1 motif spans 621 to 689 (GQFFLGKVTR…RLGRIALSRK (69 aa)).

This sequence belongs to the polyribonucleotide nucleotidyltransferase family. Requires Mg(2+) as cofactor.

Its subcellular location is the cytoplasm. It catalyses the reaction RNA(n+1) + phosphate = RNA(n) + a ribonucleoside 5'-diphosphate. Functionally, involved in mRNA degradation. Catalyzes the phosphorolysis of single-stranded polyribonucleotides processively in the 3'- to 5'-direction. The protein is Polyribonucleotide nucleotidyltransferase of Caldicellulosiruptor saccharolyticus (strain ATCC 43494 / DSM 8903 / Tp8T 6331).